The chain runs to 252 residues: Thiamine thiazole synthase (252 aa).

NAD(+) is bound by residues S35, 54–55, G62, V126, and 152–154; these read EK and HVD. The Fe cation site is built by D154 and H169. Position 217 (M217) interacts with NAD(+). R227 contacts glycine.

This sequence belongs to the THI4 family. Homooctamer; tetramer of dimers. Requires Fe(2+) as cofactor.

The catalysed reaction is hydrogen sulfide + glycine + NAD(+) = ADP-5-ethyl-4-methylthiazole-2-carboxylate + nicotinamide + 3 H2O + H(+). It participates in cofactor biosynthesis; thiamine diphosphate biosynthesis. Functionally, involved in the biosynthesis of the thiazole moiety of thiamine. Catalyzes the conversion of NAD and glycine to adenosine diphosphate 5-(2-hydroxyethyl)-4-methylthiazole-2-carboxylate (ADT), an adenylated thiazole intermediate, using free sulfide as a source of sulfur. The protein is Thiamine thiazole synthase of Pyrococcus furiosus (strain ATCC 43587 / DSM 3638 / JCM 8422 / Vc1).